A 433-amino-acid polypeptide reads, in one-letter code: Tol-Pal system protein TolB (433 aa).

Residues 1–26 (MSLMTKLGFRALVASCLIAAGGAAHA) form the signal peptide.

It belongs to the TolB family. In terms of assembly, the Tol-Pal system is composed of five core proteins: the inner membrane proteins TolA, TolQ and TolR, the periplasmic protein TolB and the outer membrane protein Pal. They form a network linking the inner and outer membranes and the peptidoglycan layer.

It is found in the periplasm. In terms of biological role, part of the Tol-Pal system, which plays a role in outer membrane invagination during cell division and is important for maintaining outer membrane integrity. The polypeptide is Tol-Pal system protein TolB (Burkholderia thailandensis (strain ATCC 700388 / DSM 13276 / CCUG 48851 / CIP 106301 / E264)).